The chain runs to 598 residues: Aspartate--tRNA ligase (598 aa).

Glu173 contributes to the L-aspartate binding site. An aspartate region spans residues Gln197–Lys200. L-aspartate is bound at residue Arg219. ATP contacts are provided by residues Arg219–Glu221 and Gln228. His449 is a binding site for L-aspartate. Glu483 serves as a coordination point for ATP. Arg490 contacts L-aspartate. Gly535 to Arg538 is a binding site for ATP.

The protein belongs to the class-II aminoacyl-tRNA synthetase family. Type 1 subfamily. Homodimer.

It is found in the cytoplasm. It catalyses the reaction tRNA(Asp) + L-aspartate + ATP = L-aspartyl-tRNA(Asp) + AMP + diphosphate. Catalyzes the attachment of L-aspartate to tRNA(Asp) in a two-step reaction: L-aspartate is first activated by ATP to form Asp-AMP and then transferred to the acceptor end of tRNA(Asp). The polypeptide is Aspartate--tRNA ligase (Shewanella halifaxensis (strain HAW-EB4)).